We begin with the raw amino-acid sequence, 308 residues long: MSEITAAMVKELREKTGAGMMDCKKALAETNGDMEAAIDWLRAKGIAKADKKSGRTAAEGLIGVSSEGTKAVVVEVNSETDFVARNDAFQDLVRGIAKVAVSTNGSVEAVAAATYPASGKSVSDTIKDAIATIGENMNLRRSVALSVEDGVVATYIHNAVSDGLGKLGVLVALKSTGDKEALNAIGRQVAMHIAATAPLAIRPEEVDAAVAERERNVFIEQSRASGKPDNIIEKMVEGRMRKFFEEVALLSQAFVINPDLTVAAAVKEAEKAVGAPIEVAGMARLLLGEGVEKEETDFAAEVAAAVKG.

An involved in Mg(2+) ion dislocation from EF-Tu region spans residues 80–83 (TDFV).

The protein belongs to the EF-Ts family.

Its subcellular location is the cytoplasm. Functionally, associates with the EF-Tu.GDP complex and induces the exchange of GDP to GTP. It remains bound to the aminoacyl-tRNA.EF-Tu.GTP complex up to the GTP hydrolysis stage on the ribosome. In Rhizobium etli (strain CIAT 652), this protein is Elongation factor Ts.